Reading from the N-terminus, the 224-residue chain is Heme response regulator HssR (224 aa).

In terms of domain architecture, Response regulatory spans 3–116; sequence QCLVVDDDSR…ELIFRIRAVL (114 aa). Asp52 is subject to 4-aspartylphosphate. Residues 124–222 constitute a DNA-binding region (ompR/PhoB-type); the sequence is NSEMTIGNLT…VRGQGYKVEN (99 aa).

Phosphorylated by HssS.

The protein resides in the cytoplasm. Member of the two-component regulatory system HssS/HssR involved in intracellular heme homeostasis and tempering of staphylococcal virulence. Phosphorylated HssR binds to a direct repeat sequence within hrtAB promoter and activates the expression of hrtAB, an efflux pump, in response to extracellular heme, hemin, hemoglobin or blood. The sequence is that of Heme response regulator HssR (hssR) from Staphylococcus aureus (strain bovine RF122 / ET3-1).